The primary structure comprises 326 residues: L-lactate dehydrogenase (326 aa).

Asp39 to Asp60 is an NAD(+) binding site. Residues Arg99, Asn131, and Arg162 each coordinate substrate. NAD(+) is bound at residue Asn131. The active-site Proton acceptor is His186.

It belongs to the LDH/MDH superfamily. LDH family. As to quaternary structure, homotetramer.

The catalysed reaction is (S)-lactate + NAD(+) = pyruvate + NADH + H(+). The protein operates within fermentation; pyruvate fermentation to lactate; (S)-lactate from pyruvate: step 1/1. In Toxoplasma gondii, this protein is L-lactate dehydrogenase.